The sequence spans 253 residues: Small ribosomal subunit protein eS4 (253 aa).

The region spanning 43 to 114 is the S4 RNA-binding domain; the sequence is LPLLLIVRNV…YPVKFFKLHP (72 aa).

Belongs to the eukaryotic ribosomal protein eS4 family.

The polypeptide is Small ribosomal subunit protein eS4 (rps4e) (Aeropyrum pernix (strain ATCC 700893 / DSM 11879 / JCM 9820 / NBRC 100138 / K1)).